Here is a 503-residue protein sequence, read N- to C-terminus: Intracellular exo-alpha-(1-&gt;5)-L-arabinofuranosidase (503 aa).

Positions 27, 72, and 172 each coordinate alpha-L-arabinofuranose. Residue E173 is the Proton donor/acceptor of the active site. Alpha-L-arabinofuranose contacts are provided by Y244, E292, and Q352. The active-site Nucleophile is E292.

This sequence belongs to the glycosyl hydrolase 51 family. As to quaternary structure, homohexamer; trimer of dimers.

The protein resides in the cytoplasm. It catalyses the reaction Hydrolysis of terminal non-reducing alpha-L-arabinofuranoside residues in alpha-L-arabinosides.. Its pathway is glycan metabolism; L-arabinan degradation. Involved in the degradation of arabinan and is a key enzyme in the complete degradation of the plant cell wall. Catalyzes the cleavage of terminal alpha-(1-&gt;5)-arabinofuranosyl bonds in small oligosaccharides as alpha-(1-&gt;5)-linked arabinobiose/arabinotriose, but does not display significant activity against linear non-substituted arabinan. It is also highly efficient in the cleavage of alpha-(1-&gt;3)-linked arabinoside of xylobiose and of the alpha-(1-&gt;3)-linked arabinoside decorations of polymeric wheat arabinoxylan. It exhibits very low activity against sugar beet arabinan. The polypeptide is Intracellular exo-alpha-(1-&gt;5)-L-arabinofuranosidase (Acetivibrio thermocellus (strain ATCC 27405 / DSM 1237 / JCM 9322 / NBRC 103400 / NCIMB 10682 / NRRL B-4536 / VPI 7372) (Clostridium thermocellum)).